The primary structure comprises 465 residues: MQGFISQVLGPVVDVDFNDYLPQINEAIVVNFESEGKKHKLVLEVAAHLGDNRVRTIAMDMTDGLVRGLKAEALGAPISVPVGEKVLGRIFNVTGDLIDEGEEISFDKKWAIHRDPPAFEDQSTKSEIFETGIKVVDLLAPYAKGGKVGLFGGAGVGKTVIIMELIHNVAFKHSGYSVFAGVGERTREGNDLYNEMKESNVLDKVALCYGQMNEPPGARNRIALTGLTMAEYFRDEMGLDVLMFIDNIFRFSQSGSEMSALLGRIPSAVGYQPTLASEMGKFQERITSTKKGSITSVQAVYVPADDLTDPAPATVFAHLDATTVLNRAIAEKGIYPAVDPLDSTSRMLDPNIIGEEHYKVARGVQSVLQKYKDLQDIIAILGMDELSEEDKLVVERARKIEKFLSQPFFVAEVFTGSPGKYISLEDTIAGFKGILEGKYDHLPENAFYMVGNIDEAIAKADKLKG.

152–159 provides a ligand contact to ATP; that stretch reads GGAGVGKT.

It belongs to the ATPase alpha/beta chains family. In terms of assembly, F-type ATPases have 2 components, CF(1) - the catalytic core - and CF(0) - the membrane proton channel. CF(1) has five subunits: alpha(3), beta(3), gamma(1), delta(1), epsilon(1). CF(0) has three main subunits: a(1), b(2) and c(9-12). The alpha and beta chains form an alternating ring which encloses part of the gamma chain. CF(1) is attached to CF(0) by a central stalk formed by the gamma and epsilon chains, while a peripheral stalk is formed by the delta and b chains.

The protein resides in the cell inner membrane. It carries out the reaction ATP + H2O + 4 H(+)(in) = ADP + phosphate + 5 H(+)(out). Its function is as follows. Produces ATP from ADP in the presence of a proton gradient across the membrane. The catalytic sites are hosted primarily by the beta subunits. This is ATP synthase subunit beta from Campylobacter jejuni subsp. jejuni serotype O:6 (strain 81116 / NCTC 11828).